The primary structure comprises 147 residues: MHGMGYDSRLDRLAATSWYPFFNNVTARGEIMEPYSLTLDEACDFLKISRPTAINWIRTGRLQATRKDPTKSKSPYLTTRQACIAALQSPLHTVQVSAGDGITEERKCHSSAEVKYGTPVSHCRTVKDLNSLLEQRTKGRRQNSMTS.

Functionally, excisionase and integrase are necessary for the excision of prophage from the host genome by site-specific recombination. This chain is Excisionase (xis), found in Shigella phage SfV (Shigella flexneri bacteriophage V).